Reading from the N-terminus, the 162-residue chain is 3-dehydroquinate dehydratase (162 aa).

Tyr22 serves as the catalytic Proton acceptor. Asn73, His79, and Asp86 together coordinate substrate. The Proton donor role is filled by His99. Substrate is bound by residues 100–101 and Arg110; that span reads LS.

Belongs to the type-II 3-dehydroquinase family. Homododecamer.

The enzyme catalyses 3-dehydroquinate = 3-dehydroshikimate + H2O. Its pathway is metabolic intermediate biosynthesis; chorismate biosynthesis; chorismate from D-erythrose 4-phosphate and phosphoenolpyruvate: step 3/7. Functionally, catalyzes a trans-dehydration via an enolate intermediate. This chain is 3-dehydroquinate dehydratase, found in Sulfurovum sp. (strain NBC37-1).